A 322-amino-acid chain; its full sequence is Arginase-1 (322 aa).

Positions 1-27 are disordered; it reads MSSKPQSIGVIGAPFSKGQPRGGVEEG. Phosphoserine is present on Ser7. The residue at position 17 (Lys17) is an N6-succinyllysine. Phosphoserine is present on Ser62. Residue Lys75 is modified to N6-succinyllysine. Residues His101, Asp124, His126, and Asp128 each contribute to the Mn(2+) site. Residues 126-130, 137-139, and Asp183 each bind substrate; these read HTDIN and TGN. Ser217 is subject to Phosphoserine. 2 residues coordinate Mn(2+): Asp232 and Asp234. Thr246 and Glu277 together coordinate substrate.

This sequence belongs to the arginase family. Homotrimer. Interacts with CMTM6. It depends on Mn(2+) as a cofactor.

It localises to the cytoplasm. It catalyses the reaction L-arginine + H2O = urea + L-ornithine. It functions in the pathway nitrogen metabolism; urea cycle; L-ornithine and urea from L-arginine: step 1/1. The sequence is that of Arginase-1 (ARG1) from Bos taurus (Bovine).